The sequence spans 512 residues: Bestrophin-2 (512 aa).

At 1-31 the chain is on the cytoplasmic side; the sequence is MTVTYTARVAKARFGGFSKLLLLWRGSIYKL. Ala-10 is a binding site for Ca(2+). The chain crosses the membrane as a helical span at residues 32–51; that stretch reads LWRELLCFLGLFMALSAAYR. The Extracellular portion of the chain corresponds to 52 to 60; sequence FVLTEEQKR. A helical transmembrane segment spans residues 61–82; that stretch reads YFEKLVLYCDRYASLIPVSFVL. The Cytoplasmic portion of the chain corresponds to 83-238; it reads GFYVTLVVHR…WISVPLVYTQ (156 aa). Residues 239-255 traverse the membrane as a helical segment; sequence VVTIAVYSYFLACLIGR. Over 256-274 the chain is Extracellular; the sequence is QFLDPAQGYKDHDLDLCVP. The helical transmembrane segment at 275–288 threads the bilayer; that stretch reads IFTLLQFFFYAGWL. The Cytoplasmic segment spans residues 289–512; that stretch reads KVAEQLINPF…PIGEEEESLA (224 aa). Ca(2+) contacts are provided by Gln-293, Asn-296, Asp-301, and Asp-304. The segment at 453–512 is disordered; it reads VDLGQPEPESEPITGPESPALVPAPRAPSEPLTVVPLSGTRGPAPPWLPSPIGEEEESLA.

This sequence belongs to the anion channel-forming bestrophin (TC 1.A.46) family. Calcium-sensitive chloride channel subfamily. In terms of assembly, pentamer. Interacts with GLUL; this interaction tethers a fraction of GLUL to the membrane, causing a decrease of cytosolic glutamine synthase (GS) activity and inhibits the chloride channel activity of BEST2 by affecting the gating at the aperture in the absence of intracellular glutamate.

The protein resides in the cell membrane. It is found in the basolateral cell membrane. The enzyme catalyses chloride(in) = chloride(out). The catalysed reaction is iodide(out) = iodide(in). It carries out the reaction hydrogencarbonate(in) = hydrogencarbonate(out). It catalyses the reaction L-glutamate(out) = L-glutamate(in). The enzyme catalyses L-glutamine(out) = L-glutamine(in). With respect to regulation, chloride channel activity is allosterically inhibited by GLUL/glutamine synthase (GS) which affects the gating at the aperture in the absence of intracellular glutamate. Inhibitory effect of GLUL is relieved upon increasing of intracellular level of L-glutamate. In terms of biological role, ligand-gated anion channel that allows the movement of anions across cell membranes when activated by calcium (Ca2+). Transports a large specter of anions, namely mediates the movement of chloride, L-glutamate and iodide. Calcium-binding triggers the dilation of the aperture, but calcium-dependent gating is only effective when the size of the passing anion is bigger than the closed aperture. Mediates the calcium-activated hydrogencarbonate movement and participates in colonic hydrogencarbonate secretion concomitant with mucin secretion. In non-pigmented epithelium (NPE), mediates the efflux of intracellular L-glutamate; binding of intracellular L-glutamate activates and open both the neck and the aperture of the channel, leading to L-glutamate exit promoting chloride influx movement from the extracellular side in trans. Also exhibits a directional permeability for intracellular glutamine, in a similar manner as for L-glutamate. In Bos taurus (Bovine), this protein is Bestrophin-2.